A 387-amino-acid polypeptide reads, in one-letter code: S-adenosylmethionine synthase (387 aa).

Histidine 15 contacts ATP. A Mg(2+)-binding site is contributed by aspartate 17. Position 43 (glutamate 43) interacts with K(+). Residues glutamate 56 and glutamine 99 each coordinate L-methionine. The segment at 99–109 (QSPDIAQGVNR) is flexible loop. Residues 166–168 (DAK), 232–233 (RF), aspartate 241, 247–248 (RK), alanine 264, and lysine 268 contribute to the ATP site. Residue aspartate 241 participates in L-methionine binding. Lysine 272 provides a ligand contact to L-methionine.

Belongs to the AdoMet synthase family. As to quaternary structure, homotetramer; dimer of dimers. Mg(2+) serves as cofactor. K(+) is required as a cofactor.

It is found in the cytoplasm. It carries out the reaction L-methionine + ATP + H2O = S-adenosyl-L-methionine + phosphate + diphosphate. It functions in the pathway amino-acid biosynthesis; S-adenosyl-L-methionine biosynthesis; S-adenosyl-L-methionine from L-methionine: step 1/1. Functionally, catalyzes the formation of S-adenosylmethionine (AdoMet) from methionine and ATP. The overall synthetic reaction is composed of two sequential steps, AdoMet formation and the subsequent tripolyphosphate hydrolysis which occurs prior to release of AdoMet from the enzyme. This Nitrosomonas europaea (strain ATCC 19718 / CIP 103999 / KCTC 2705 / NBRC 14298) protein is S-adenosylmethionine synthase.